Reading from the N-terminus, the 147-residue chain is Large ribosomal subunit protein uL15 (147 aa).

Residues 1-13 (MRLHDLKPAEGAR) show a composition bias toward basic and acidic residues. The tract at residues 1 to 58 (MRLHDLKPAEGARRERKRVGRGIGSGHGKTSGRGQKGQKARSGGGVRPGFEGGQMPLT) is disordered. Gly residues-rich tracts occupy residues 21-35 (RGIG…GRGQ) and 42-52 (SGGGVRPGFEG).

It belongs to the universal ribosomal protein uL15 family. In terms of assembly, part of the 50S ribosomal subunit.

Its function is as follows. Binds to the 23S rRNA. This chain is Large ribosomal subunit protein uL15, found in Thermoanaerobacter sp. (strain X514).